We begin with the raw amino-acid sequence, 554 residues long: Macrophage colony-stimulating factor 1 (554 aa).

An N-terminal signal peptide occupies residues M1–T32. Residues E33–S496 lie on the Lumenal side of the membrane. 3 disulfides stabilise this stretch: C39–C122, C80–C171, and C134–C178. Residues N154 and N172 are each glycosylated (N-linked (GlcNAc...) asparagine). Positions E224–S488 are disordered. T266 bears the Phosphothreonine; by FAM20C mark. S309 is a glycosylation site (O-linked (Xyl...) (chondroitin sulfate) serine). Residues L344–A354 show a composition bias toward low complexity. O-linked (GalNAc...) threonine glycosylation is found at T363 and T365. Polar residues predominate over residues R404–S433. The tract at residues S406–S426 is O-glycosylated at one site. Over residues L440 to A453 the composition is skewed to basic and acidic residues. Residues V497 to F517 form a helical membrane-spanning segment. Residues Y518–V554 are Cytoplasmic-facing. The segment at Q526–V554 is disordered. The segment covering Q545–V554 has biased composition (basic and acidic residues).

As to quaternary structure, homodimer or heterodimer; disulfide-linked. Likely to exist in multiple forms: homodimer consisting of 2 identical 150-200 kDa proteoglycan subunits, heterodimer consisting of a 150-200 kDa proteoglycan subunit and a truncated 43 kDa subunit, and homodimer consisting of 2 identical 43 kDa subunits. Interacts with CSF1R. In terms of processing, N-glycosylated. O-glycosylated; contains chondroitin sulfate. O-glycosylated with core 1 or possibly core 8 glycans. Post-translationally, O-glycosylated.

The protein localises to the cell membrane. It is found in the secreted. The protein resides in the extracellular space. In terms of biological role, cytokine that plays an essential role in the regulation of survival, proliferation and differentiation of hematopoietic precursor cells, especially mononuclear phagocytes, such as macrophages and monocytes. Promotes the release of pro-inflammatory chemokines, and thereby plays an important role in innate immunity and in inflammatory processes. Plays an important role in the regulation of osteoclast proliferation and differentiation, the regulation of bone resorption, and is required for normal bone development. Required for normal male and female fertility. Promotes reorganization of the actin cytoskeleton, regulates formation of membrane ruffles, cell adhesion and cell migration. Plays a role in lipoprotein clearance. The protein is Macrophage colony-stimulating factor 1 (CSF1) of Homo sapiens (Human).